A 184-amino-acid polypeptide reads, in one-letter code: NADH-quinone oxidoreductase subunit B 1 (184 aa).

[4Fe-4S] cluster contacts are provided by Cys-37, Cys-38, Cys-103, and Cys-132.

Belongs to the complex I 20 kDa subunit family. As to quaternary structure, NDH-1 is composed of 14 different subunits. Subunits NuoB, C, D, E, F, and G constitute the peripheral sector of the complex. [4Fe-4S] cluster serves as cofactor.

It localises to the cell membrane. It catalyses the reaction a quinone + NADH + 5 H(+)(in) = a quinol + NAD(+) + 4 H(+)(out). NDH-1 shuttles electrons from NADH, via FMN and iron-sulfur (Fe-S) centers, to quinones in the respiratory chain. The immediate electron acceptor for the enzyme in this species is believed to be a menaquinone. Couples the redox reaction to proton translocation (for every two electrons transferred, four hydrogen ions are translocated across the cytoplasmic membrane), and thus conserves the redox energy in a proton gradient. In Streptomyces griseus subsp. griseus (strain JCM 4626 / CBS 651.72 / NBRC 13350 / KCC S-0626 / ISP 5235), this protein is NADH-quinone oxidoreductase subunit B 1.